Reading from the N-terminus, the 89-residue chain is Small ribosomal subunit protein uS15 (89 aa).

It belongs to the universal ribosomal protein uS15 family. In terms of assembly, part of the 30S ribosomal subunit. Forms a bridge to the 50S subunit in the 70S ribosome, contacting the 23S rRNA.

One of the primary rRNA binding proteins, it binds directly to 16S rRNA where it helps nucleate assembly of the platform of the 30S subunit by binding and bridging several RNA helices of the 16S rRNA. In terms of biological role, forms an intersubunit bridge (bridge B4) with the 23S rRNA of the 50S subunit in the ribosome. In Streptococcus pneumoniae (strain P1031), this protein is Small ribosomal subunit protein uS15.